The following is a 436-amino-acid chain: Trigger factor (436 aa).

The region spanning 161–246 (DDQLNIDFVG…VNSVSEPKLP (86 aa)) is the PPIase FKBP-type domain.

This sequence belongs to the FKBP-type PPIase family. Tig subfamily.

The protein localises to the cytoplasm. It carries out the reaction [protein]-peptidylproline (omega=180) = [protein]-peptidylproline (omega=0). Its function is as follows. Involved in protein export. Acts as a chaperone by maintaining the newly synthesized protein in an open conformation. Functions as a peptidyl-prolyl cis-trans isomerase. This Pseudomonas fluorescens (strain ATCC BAA-477 / NRRL B-23932 / Pf-5) protein is Trigger factor.